We begin with the raw amino-acid sequence, 316 residues long: Adenine deaminase (316 aa).

Residues His-14, His-16, and His-194 each contribute to the Zn(2+) site. Residue Glu-197 is the Proton donor of the active site. Asp-275 is a binding site for Zn(2+). Asp-276 contacts substrate.

The protein belongs to the metallo-dependent hydrolases superfamily. Adenosine and AMP deaminases family. Adenine deaminase type 2 subfamily. It depends on Zn(2+) as a cofactor.

It carries out the reaction adenine + H2O + H(+) = hypoxanthine + NH4(+). Its function is as follows. Catalyzes the hydrolytic deamination of adenine to hypoxanthine. Plays an important role in the purine salvage pathway and in nitrogen catabolism. This is Adenine deaminase from Pseudomonas paraeruginosa (strain DSM 24068 / PA7) (Pseudomonas aeruginosa (strain PA7)).